We begin with the raw amino-acid sequence, 267 residues long: Shikimate dehydrogenase (NADP(+)) (267 aa).

Shikimate-binding positions include Ser14–Ser16 and Thr61. Lys65 (proton acceptor) is an active-site residue. The shikimate site is built by Asn86 and Asp101. NADP(+) is bound by residues Gly126–Ala130, Asn150–Lys155, and Leu213. Position 215 (Tyr215) interacts with shikimate. Gly236 serves as a coordination point for NADP(+).

Belongs to the shikimate dehydrogenase family. Homodimer.

It catalyses the reaction shikimate + NADP(+) = 3-dehydroshikimate + NADPH + H(+). The protein operates within metabolic intermediate biosynthesis; chorismate biosynthesis; chorismate from D-erythrose 4-phosphate and phosphoenolpyruvate: step 4/7. Its function is as follows. Involved in the biosynthesis of the chorismate, which leads to the biosynthesis of aromatic amino acids. Catalyzes the reversible NADPH linked reduction of 3-dehydroshikimate (DHSA) to yield shikimate (SA). The protein is Shikimate dehydrogenase (NADP(+)) of Vesicomyosocius okutanii subsp. Calyptogena okutanii (strain HA).